Reading from the N-terminus, the 154-residue chain is Endoribonuclease YbeY (154 aa).

Positions 113, 117, and 123 each coordinate Zn(2+).

Belongs to the endoribonuclease YbeY family. Zn(2+) serves as cofactor.

The protein localises to the cytoplasm. Single strand-specific metallo-endoribonuclease involved in late-stage 70S ribosome quality control and in maturation of the 3' terminus of the 16S rRNA. The chain is Endoribonuclease YbeY from Aeromonas hydrophila subsp. hydrophila (strain ATCC 7966 / DSM 30187 / BCRC 13018 / CCUG 14551 / JCM 1027 / KCTC 2358 / NCIMB 9240 / NCTC 8049).